The chain runs to 254 residues: Probable pectate lyase E (254 aa).

The signal sequence occupies residues 1-17; it reads MYQPLLLLPLLLTSAFA. Asn175 is a glycosylation site (N-linked (GlcNAc...) asparagine). The disordered stretch occupies residues 228-254; the sequence is DNNKKEPAKKSSGPSNACKYKEPLASC.

This sequence belongs to the polysaccharide lyase 3 family. The cofactor is Ca(2+).

It localises to the secreted. It carries out the reaction Eliminative cleavage of (1-&gt;4)-alpha-D-galacturonan to give oligosaccharides with 4-deoxy-alpha-D-galact-4-enuronosyl groups at their non-reducing ends.. Functionally, pectinolytic enzyme consist of four classes of enzymes: pectin lyase, polygalacturonase, pectin methylesterase and rhamnogalacturonase. Among pectinolytic enzymes, pectin lyase is the most important in depolymerization of pectin, since it cleaves internal glycosidic bonds of highly methylated pectins. Favors pectate, the anion, over pectin, the methyl ester. This chain is Probable pectate lyase E (plyE), found in Aspergillus fumigatus (strain ATCC MYA-4609 / CBS 101355 / FGSC A1100 / Af293) (Neosartorya fumigata).